The following is a 514-amino-acid chain: UDP-N-acetylmuramoyl-L-alanyl-D-glutamate--2,6-diaminopimelate ligase (514 aa).

T37 contributes to the UDP-N-acetyl-alpha-D-muramoyl-L-alanyl-D-glutamate binding site. Position 125 to 131 (125 to 131 (GTNGKTS)) interacts with ATP. UDP-N-acetyl-alpha-D-muramoyl-L-alanyl-D-glutamate contacts are provided by residues 167-168 (TT), S194, Q200, and R202. K234 is modified (N6-carboxylysine). Meso-2,6-diaminopimelate is bound by residues R406, 430 to 433 (DNPR), G481, and E485. The Meso-diaminopimelate recognition motif signature appears at 430–433 (DNPR).

It belongs to the MurCDEF family. MurE subfamily. The cofactor is Mg(2+). Carboxylation is probably crucial for Mg(2+) binding and, consequently, for the gamma-phosphate positioning of ATP.

The protein localises to the cytoplasm. It carries out the reaction UDP-N-acetyl-alpha-D-muramoyl-L-alanyl-D-glutamate + meso-2,6-diaminopimelate + ATP = UDP-N-acetyl-alpha-D-muramoyl-L-alanyl-gamma-D-glutamyl-meso-2,6-diaminopimelate + ADP + phosphate + H(+). It participates in cell wall biogenesis; peptidoglycan biosynthesis. Catalyzes the addition of meso-diaminopimelic acid to the nucleotide precursor UDP-N-acetylmuramoyl-L-alanyl-D-glutamate (UMAG) in the biosynthesis of bacterial cell-wall peptidoglycan. This is UDP-N-acetylmuramoyl-L-alanyl-D-glutamate--2,6-diaminopimelate ligase from Ralstonia nicotianae (strain ATCC BAA-1114 / GMI1000) (Ralstonia solanacearum).